A 351-amino-acid polypeptide reads, in one-letter code: Phenoloxidase-activating factor 3 (351 aa).

A signal peptide spans 1–19 (MWLSLVILGVASAIVNVST). N16 carries N-linked (GlcNAc...) asparagine glycosylation. Residues 22-73 (SCTTPNGETATCLPIESCKIFWDYVVTSGADPEINSFLRASLCRQGNYVVCC) enclose the Clip domain. 8 disulfides stabilise this stretch: C23–C72, C33–C64, C39–C73, C89–C224, C127–C143, C167–C176, C268–C285, and C295–C326. The Peptidase S1 domain occupies 97–350 (VLGGEDTDLG…HLDWIKQNVR (254 aa)). The active-site Charge relay system is H142. Positions 158, 160, 163, and 166 each coordinate Ca(2+). D204 acts as the Charge relay system in catalysis. S299 (charge relay system) is an active-site residue.

This sequence belongs to the peptidase S1 family. CLIP subfamily. In terms of assembly, in the active form, heterodimer of a light chain and a heavy chain; disulfide-linked. In terms of processing, proteolytically cleaved.

It is found in the secreted. With respect to regulation, cleavage of PPAF2 is Ca(2+)-independent. Inhibited by heparin. In terms of biological role, serine endopeptidase which, by cleaving prophenoloxidase activating factor PPAF2, is required for the activation of the prophenoloxidase cascade probably following the recognition of pathogen-derived products. The protein is Phenoloxidase-activating factor 3 of Holotrichia diomphalia (Korean black chafer).